Here is a 204-residue protein sequence, read N- to C-terminus: LexA repressor (204 aa).

A DNA-binding region (H-T-H motif) is located at residues 28-48; the sequence is RAEIAQELGFKSPNAAEEHLK. Catalysis depends on for autocatalytic cleavage activity residues serine 125 and lysine 162.

It belongs to the peptidase S24 family. In terms of assembly, homodimer.

It carries out the reaction Hydrolysis of Ala-|-Gly bond in repressor LexA.. Its function is as follows. Represses a number of genes involved in the response to DNA damage (SOS response), including recA and lexA. In the presence of single-stranded DNA, RecA interacts with LexA causing an autocatalytic cleavage which disrupts the DNA-binding part of LexA, leading to derepression of the SOS regulon and eventually DNA repair. The protein is LexA repressor of Pseudomonas aeruginosa (strain LESB58).